The chain runs to 198 residues: Recombination protein RecR (198 aa).

The segment at 57 to 72 adopts a C4-type zinc-finger fold; the sequence is CSVCGHITDRDPCYIC. The Toprim domain occupies 80–175; it reads SVVCVVQEPK…KVTRIAHGLP (96 aa).

The protein belongs to the RecR family.

Its function is as follows. May play a role in DNA repair. It seems to be involved in an RecBC-independent recombinational process of DNA repair. It may act with RecF and RecO. This chain is Recombination protein RecR, found in Bacillus thuringiensis (strain Al Hakam).